We begin with the raw amino-acid sequence, 235 residues long: Aspartate/glutamate leucyltransferase (235 aa).

Belongs to the R-transferase family. Bpt subfamily.

It is found in the cytoplasm. The catalysed reaction is N-terminal L-glutamyl-[protein] + L-leucyl-tRNA(Leu) = N-terminal L-leucyl-L-glutamyl-[protein] + tRNA(Leu) + H(+). It carries out the reaction N-terminal L-aspartyl-[protein] + L-leucyl-tRNA(Leu) = N-terminal L-leucyl-L-aspartyl-[protein] + tRNA(Leu) + H(+). Its function is as follows. Functions in the N-end rule pathway of protein degradation where it conjugates Leu from its aminoacyl-tRNA to the N-termini of proteins containing an N-terminal aspartate or glutamate. The chain is Aspartate/glutamate leucyltransferase from Pseudomonas putida (strain ATCC 47054 / DSM 6125 / CFBP 8728 / NCIMB 11950 / KT2440).